The sequence spans 317 residues: Melanocyte-stimulating hormone receptor (317 aa).

At 1 to 37 the chain is on the extracellular side; the sequence is MPVLGSQRRLLGSLNCTPPATFPLTLAPNRTGPQCLE. Asn29 is a glycosylation site (N-linked (GlcNAc...) asparagine). Residues 38 to 63 form a helical membrane-spanning segment; the sequence is VSIPDGLFLSLGLVSLVENVLVVAAI. At 64-72 the chain is on the cytoplasmic side; it reads AKNRNLHSP. The chain crosses the membrane as a helical span at residues 73–93; the sequence is MYYFICCLAVSDLLVSVSNVL. Residues 94-118 are Extracellular-facing; it reads ETAVMLLLEAGALAARAAVVQQLDN. The chain crosses the membrane as a helical span at residues 119–140; it reads VIDMLICGSMVSSLCFLGAIAV. At 141–163 the chain is on the cytoplasmic side; the sequence is DRYISIFYALRYHSVVTLPRAWR. Residues 164-183 form a helical membrane-spanning segment; the sequence is IIAAIWVASILTSLLFITYY. Topologically, residues 184–191 are extracellular; it reads NHTVVLLC. Residues 192–211 form a helical membrane-spanning segment; sequence LVGFFIAMLALMAVLYVHML. Residues 212–240 are Cytoplasmic-facing; that stretch reads ARACQHARGIARLQKRQRPIHQGFGLKGA. A helical transmembrane segment spans residues 241–266; sequence ATLTILLGVFFLCWGPFFLHLSLIVL. Over 267-279 the chain is Extracellular; that stretch reads CPQHPTCGCIFKN. Residues 280–300 form a helical membrane-spanning segment; sequence FNLFLALIICNAIVDPLIYAF. Over 301–317 the chain is Cytoplasmic; that stretch reads RSQELRKTLQEVLQCSW. Residue Cys315 is the site of S-palmitoyl cysteine attachment.

Belongs to the G-protein coupled receptor 1 family. Interacts with MGRN1, but does not undergo MGRN1-mediated ubiquitination; this interaction competes with GNAS-binding and thus inhibits agonist-induced cAMP production. Interacts with OPN3; the interaction results in a decrease in MC1R-mediated cAMP signaling and ultimately a decrease in melanin production in melanocytes.

It localises to the cell membrane. In terms of biological role, receptor for MSH (alpha, beta and gamma) and ACTH. The activity of this receptor is mediated by G proteins which activate adenylate cyclase. Mediates melanogenesis, the production of eumelanin (black/brown) and phaeomelanin (red/yellow), via regulation of cAMP signaling in melanocytes. The sequence is that of Melanocyte-stimulating hormone receptor (MC1R) from Capreolus capreolus (European roe deer).